A 961-amino-acid polypeptide reads, in one-letter code: Leucine--tRNA ligase (961 aa).

Residues 41–51 (PYLNGNLHAGH) carry the 'HIGH' region motif. Positions 632–636 (KMSKS) match the 'KMSKS' region motif. Lys-635 lines the ATP pocket.

This sequence belongs to the class-I aminoacyl-tRNA synthetase family.

Its subcellular location is the cytoplasm. It carries out the reaction tRNA(Leu) + L-leucine + ATP = L-leucyl-tRNA(Leu) + AMP + diphosphate. The protein is Leucine--tRNA ligase of Methanosarcina acetivorans (strain ATCC 35395 / DSM 2834 / JCM 12185 / C2A).